The chain runs to 159 residues: 3-dehydroquinate dehydratase (159 aa).

Y22 functions as the Proton acceptor in the catalytic mechanism. Substrate-binding residues include N73, H79, and D86. The Proton donor role is filled by H99. Substrate is bound by residues 100–101 and R110; that span reads IS.

This sequence belongs to the type-II 3-dehydroquinase family. As to quaternary structure, homododecamer.

It catalyses the reaction 3-dehydroquinate = 3-dehydroshikimate + H2O. It functions in the pathway metabolic intermediate biosynthesis; chorismate biosynthesis; chorismate from D-erythrose 4-phosphate and phosphoenolpyruvate: step 3/7. Catalyzes a trans-dehydration via an enolate intermediate. The sequence is that of 3-dehydroquinate dehydratase from Campylobacter jejuni subsp. jejuni serotype O:6 (strain 81116 / NCTC 11828).